The chain runs to 689 residues: Glycine--tRNA ligase beta subunit (689 aa).

This sequence belongs to the class-II aminoacyl-tRNA synthetase family. Tetramer of two alpha and two beta subunits.

It localises to the cytoplasm. It carries out the reaction tRNA(Gly) + glycine + ATP = glycyl-tRNA(Gly) + AMP + diphosphate. This is Glycine--tRNA ligase beta subunit from Shigella flexneri serotype 5b (strain 8401).